The primary structure comprises 400 residues: Cytochrome b (400 aa).

Transmembrane regions (helical) follow at residues 32-52 (FGSL…TLAM), 76-98 (WLIR…LHIG), 113-133 (TWSI…LGYV), and 179-199 (FFSL…MHLI). Heme b is bound by residues His-82 and His-96. Positions 183 and 197 each coordinate heme b. His-202 is a binding site for a ubiquinone. 4 consecutive transmembrane segments (helical) span residues 226–246 (YLFK…IFVF), 290–310 (AVGV…PYLD), 322–342 (LSKV…QLGA), and 349–369 (FIVF…IIIP).

Belongs to the cytochrome b family. As to quaternary structure, fungal cytochrome b-c1 complex contains 10 subunits; 3 respiratory subunits, 2 core proteins and 5 low-molecular weight proteins. Cytochrome b-c1 complex is a homodimer. The cofactor is heme b.

Its subcellular location is the mitochondrion inner membrane. In terms of biological role, component of the ubiquinol-cytochrome c reductase complex (complex III or cytochrome b-c1 complex) that is part of the mitochondrial respiratory chain. The b-c1 complex mediates electron transfer from ubiquinol to cytochrome c. Contributes to the generation of a proton gradient across the mitochondrial membrane that is then used for ATP synthesis. The sequence is that of Cytochrome b (cob) from Epidermophyton floccosum.